The sequence spans 193 residues: NAD(P)H-quinone oxidoreductase subunit I (193 aa).

4Fe-4S ferredoxin-type domains follow at residues G55–E84 and K95–E124. C64, C67, C70, C74, C104, C107, C110, and C114 together coordinate [4Fe-4S] cluster. A disordered region spans residues L169–D193.

The protein belongs to the complex I 23 kDa subunit family. In terms of assembly, NDH-1 is composed of at least 11 different subunits. [4Fe-4S] cluster serves as cofactor.

It localises to the cellular thylakoid membrane. It catalyses the reaction a plastoquinone + NADH + (n+1) H(+)(in) = a plastoquinol + NAD(+) + n H(+)(out). The enzyme catalyses a plastoquinone + NADPH + (n+1) H(+)(in) = a plastoquinol + NADP(+) + n H(+)(out). In terms of biological role, NDH-1 shuttles electrons from an unknown electron donor, via FMN and iron-sulfur (Fe-S) centers, to quinones in the respiratory and/or the photosynthetic chain. The immediate electron acceptor for the enzyme in this species is believed to be plastoquinone. Couples the redox reaction to proton translocation, and thus conserves the redox energy in a proton gradient. The sequence is that of NAD(P)H-quinone oxidoreductase subunit I from Rippkaea orientalis (strain PCC 8801 / RF-1) (Cyanothece sp. (strain PCC 8801)).